Here is a 239-residue protein sequence, read N- to C-terminus: Thymidylate kinase (239 aa).

10–17 (GVNRVGKS) serves as a coordination point for ATP.

It belongs to the thymidylate kinase family.

The catalysed reaction is dTMP + ATP = dTDP + ADP. Its pathway is pyrimidine metabolism; dTTP biosynthesis. Functionally, catalyzes the conversion of dTMP to dTDP. The protein is Thymidylate kinase (TMK) of African swine fever virus (isolate Tick/South Africa/Pretoriuskop Pr4/1996) (ASFV).